We begin with the raw amino-acid sequence, 891 residues long: Microtubule-associated protein 10 (891 aa).

Disordered stretches follow at residues 325-355, 401-457, 504-679, and 702-844; these read AAVQ…PPQI, EDKG…VTKG, SWKG…KSSC, and TTEN…SNLS. Residues 407–417 show a composition bias toward low complexity; sequence PSTKSTSPSES. 2 stretches are compositionally biased toward polar residues: residues 509-520 and 527-544; these read VSSSAAESQMSP and PTDS…SQLP. Basic and acidic residues-rich tracts occupy residues 577-592 and 645-658; these read STTK…KQEM and TVDK…DGRQ. Composition is skewed to polar residues over residues 665–679, 702–718, 726–749, 776–790, and 826–844; these read ADTS…KSSC, TTEN…SSTG, SRAS…SSVL, EASS…SQWT, and KSQS…SNLS.

In terms of assembly, interacts (via middle region) with microtubules.

Its subcellular location is the cytoplasm. It is found in the cytoskeleton. It localises to the spindle pole. The protein resides in the microtubule organizing center. The protein localises to the centrosome. Its subcellular location is the midbody. Functionally, microtubule-associated protein (MAP) that plays a role in the regulation of cell division; promotes microtubule stability and participates in the organization of the spindle midzone and normal progress of cytokinesis. This chain is Microtubule-associated protein 10 (Map10), found in Mus musculus (Mouse).